Reading from the N-terminus, the 807-residue chain is MSAQQQCDLTSYDAMYYLQTGDLQLAVNLFISPNSSFSYSGNSGQSILQSLGTIIIWVYKVNGQIHIYTIGWQPIYYSLQNGCRANIYFRLWALIQIQGAWLASEIMNMPVTLKNTGGQFVGTFIPLHLLGFAIADFPSLSSGSQGYTHMLMSQTDGSIKLLPSAPGVLPYFITVGFQCRAGAYVLKQPCPNCIFVRLCVPTSNGIPYEVLMLICLLIYAGCYASYSDILGKNGLSTVGAGVNAKVPVTAIVYFDTQQYIQQNVVSQLNVTIQLYALIWVGISTTNFVILPEISQILKMPSGLILNIPVPFQAYPTPTVAIPRILTLITCCGTPYIYNQYFPCSFDKASTVTTECGVPLVAYPTISQMQPIAGSNVAFLLSNQSADFADLLSLNYGLLNLTTQQKVSLANQYSYTMTQCKKEVIRGTYYEECVKNVSSNLNQYSSQPASPQPNIPVDEILIGVGAVALIVIGTVALVLTGGASAPVSAGLDVAGAEALGSLLLDNGALSLSSLQEEGLANTLMQTSVSDSFESEDEEIVQNEPNSAKLVVFTNTNQPFTLTVTGTDITGTVTIQSGIADFDLTITLPSGVSVPISVPAGVIDDFTDDQGYTIYEQEDQPVRLKYSDGQVIYNTISQLGKKLDGFFSLLKKLLKYIAVALLSAIASILVNMFLFMPLVASIMTSIIQSGQGVSSGGTVTVTGQSTSTTLSTALSDIASTFGQIPQILEEIPVALASAYLITDLLTDFFGDLWRGFSKNLLPNKAVNVNIPQPLEVDLKSRLKAYSEAVISKNDKGEWVINKKLRGRFS.

A run of 5 helical transmembrane segments spans residues 210–230 (VLML…SDIL), 234–254 (GLST…IVYF), 270–290 (VTIQ…FVIL), 459–479 (ILIG…LVLT), and 657–677 (VALL…MPLV).

The protein resides in the host membrane. The chain is Putative transmembrane protein ORF807 from Acidianus filamentous virus 1 (isolate United States/Yellowstone) (AFV-1).